The following is an 882-amino-acid chain: Cadherin-1 (882 aa).

Residues 1 to 23 (MGPWSRSLSALCCCCRCNPWLCR) form the signal peptide. The propeptide occupies 24 to 154 (EPEPCIPGFG…PHHGLRRQKR (131 aa)). The disordered stretch occupies residues 117–137 (EVSAHHHHHHSHHDSPSGTQT). 5 consecutive Cadherin domains span residues 154–262 (RDWV…KPQF), 263–375 (TQEV…APRF), 376–486 (NPTT…APIF), 487–595 (VPPQ…GPVP), and 594–702 (VPEP…RPAE). The Extracellular segment spans residues 155-709 (DWVIPPISCP…PAEAGLQVPA (555 aa)). A glycan (O-linked (Man...) serine) is linked at Ser-280. O-linked (Man...) threonine glycans are attached at residues Thr-285, Thr-358, Thr-470, Thr-472, and Thr-509. N-linked (GlcNAc...) asparagine glycosylation occurs at Asn-558. 3 O-linked (Man...) threonine glycosylation sites follow: Thr-576, Thr-578, and Thr-580. Asn-637 is a glycosylation site (N-linked (GlcNAc...) asparagine). A helical transmembrane segment spans residues 710–730 (ILGILGGILAFLILILLLLLL). The Cytoplasmic portion of the chain corresponds to 731–882 (VRRRRVVKEP…ADMYGGGEDD (152 aa)). Residues 747 to 767 (DTRDNVYYYDEEGGGEEDQDF) form a disordered region. A phosphotyrosine; by SRC mark is found at Tyr-753, Tyr-754, and Tyr-755. Acidic residues predominate over residues 755–767 (YDEEGGGEEDQDF). Positions 758–769 (EGGGEEDQDFDL) are required for binding CTNND1 and PSEN1. Ser-770, Ser-793, Ser-838, Ser-840, and Ser-846 each carry phosphoserine. The segment at 811-882 (IDENLKAADS…ADMYGGGEDD (72 aa)) is required for binding alpha, beta and gamma catenins.

In terms of assembly, homodimer; disulfide-linked. Component of an E-cadherin/ catenin adhesion complex composed of at least E-cadherin/CDH1, beta-catenin/CTNNB1 or gamma-catenin/JUP, and potentially alpha-catenin/CTNNA1; the complex is located to adherens junctions. Found in a complex composed of CDH1, RAP1A and PKP3; PKP3 acts as a scaffold protein within the complex, the complex is required for CDH1 localization to mature desmosome cell junctions. Interacts with the TRPV4 and CTNNB1 complex. Interacts with CTNND1. The stable association of CTNNA1 is controversial as CTNNA1 was shown not to bind to F-actin when assembled in the complex. Alternatively, the CTNNA1-containing complex may be linked to F-actin by other proteins such as LIMA1. Interaction with PSEN1, cleaves CDH1 resulting in the disassociation of cadherin-based adherens junctions (CAJs). Interacts with AJAP1 and DLGAP5. Interacts with TBC1D2. Interacts with CAV1. Interacts with PIP5K1C. Interacts with RAB8B. Interacts with DDR1; this stabilizes CDH1 at the cell surface and inhibits its internalization. Interacts with RAPGEF2. Interacts with KLRG1. Forms a ternary complex composed of ADAM10, CADH1 and EPHA4; within the complex, CADH1 is cleaved by ADAM10 which disrupts adherens junctions. Interacts with SPEF1. Interacts with CTNNB1 and PKP2. Interacts with AMOTL2; the interaction may facilitate binding of radial actin fibers to cell junction complexes. Interacts with DSG3; the interaction is required for CDH1 localization to developing adherens junctions. Post-translationally, during apoptosis or with calcium influx, cleaved by a membrane-bound metalloproteinase (ADAM10), PS1/gamma-secretase and caspase-3. Processing by the metalloproteinase, induced by calcium influx, causes disruption of cell-cell adhesion and the subsequent release of beta-catenin into the cytoplasm. The residual membrane-tethered cleavage product is rapidly degraded via an intracellular proteolytic pathway. Cleavage by caspase-3 releases the cytoplasmic tail resulting in disintegration of the actin microfilament system. The gamma-secretase-mediated cleavage promotes disassembly of adherens junctions. During development of the cochlear organ of Corti, cleavage by ADAM10 at adherens junctions promotes pillar cell separation. In terms of processing, N-glycosylation at Asn-637 is essential for expression, folding and trafficking. Addition of bisecting N-acetylglucosamine by MGAT3 modulates its cell membrane location. Ubiquitinated by a SCF complex containing SKP2, which requires prior phosphorylation by CK1/CSNK1A1. Ubiquitinated by CBLL1/HAKAI, requires prior phosphorylation at Tyr-754. Post-translationally, O-glycosylated. O-manosylated by TMTC1, TMTC2, TMTC3 or TMTC4. Thr-285 and Thr-509 are O-mannosylated by TMTC2 or TMTC4 but not TMTC1 or TMTC3.

Its subcellular location is the cell junction. The protein localises to the adherens junction. It is found in the cell membrane. The protein resides in the endosome. It localises to the golgi apparatus. Its subcellular location is the trans-Golgi network. The protein localises to the cytoplasm. It is found in the desmosome. In terms of biological role, cadherins are calcium-dependent cell adhesion proteins. They preferentially interact with themselves in a homophilic manner in connecting cells; cadherins may thus contribute to the sorting of heterogeneous cell types. CDH1 is involved in mechanisms regulating cell-cell adhesions, mobility and proliferation of epithelial cells. Promotes organization of radial actin fiber structure and cellular response to contractile forces, via its interaction with AMOTL2 which facilitates anchoring of radial actin fibers to CDH1 junction complexes at the cell membrane. Plays a role in the early stages of desmosome cell-cell junction formation via facilitating the recruitment of DSG2 and DSP to desmosome plaques. Has a potent invasive suppressor role. It is a ligand for integrin alpha-E/beta-7. Its function is as follows. E-Cad/CTF2 promotes non-amyloidogenic degradation of Abeta precursors. Has a strong inhibitory effect on APP C99 and C83 production. The chain is Cadherin-1 (CDH1) from Bos taurus (Bovine).